The following is a 356-amino-acid chain: NAC domain-containing protein JA2L (356 aa).

Residues 14-162 form the NAC domain; that stretch reads LPPGFRFYPT…DWVLCRIYKK (149 aa). Residues 111–168 mediate DNA binding; that stretch reads VGIKKALVFYIGKAPKGTKTNWIMHEYRLSEPTTKTGSSRLDDWVLCRIYKKNSGGQK. The disordered stretch occupies residues 163-191; it reads NSGGQKSSCSDLQNKDISHASSSSSSSQF. The segment covering 164–174 has biased composition (polar residues); sequence SGGQKSSCSDL.

Expressed in guard cells of the epidermis.

It localises to the nucleus. Transcription factor that acts downstream of MYC2 in the jasmonate-mediated response to Botrytis cinerea infection. With MYC2 forms a transcription module that regulates wounding-responsive genes. Involved in jasmonate- and coronatine-mediated stomatal reopening in response to Pseudomonas syringae pv tomato DC3000 infection. Regulates the expression of threonine deaminase 2 (TD2) through promoter binding. The chain is NAC domain-containing protein JA2L from Solanum lycopersicum (Tomato).